A 439-amino-acid chain; its full sequence is ATP-dependent protease ATPase subunit HslU (439 aa).

Residues isoleucine 17, 59-64, aspartate 251, glutamate 317, and arginine 389 contribute to the ATP site; that span reads GVGKTE.

The protein belongs to the ClpX chaperone family. HslU subfamily. In terms of assembly, a double ring-shaped homohexamer of HslV is capped on each side by a ring-shaped HslU homohexamer. The assembly of the HslU/HslV complex is dependent on binding of ATP.

Its subcellular location is the cytoplasm. In terms of biological role, ATPase subunit of a proteasome-like degradation complex; this subunit has chaperone activity. The binding of ATP and its subsequent hydrolysis by HslU are essential for unfolding of protein substrates subsequently hydrolyzed by HslV. HslU recognizes the N-terminal part of its protein substrates and unfolds these before they are guided to HslV for hydrolysis. The chain is ATP-dependent protease ATPase subunit HslU from Campylobacter jejuni subsp. jejuni serotype O:23/36 (strain 81-176).